The following is a 1090-amino-acid chain: Nitrogen assimilation transcription factor nit-4 (1090 aa).

Residues 1-14 show a composition bias toward polar residues; the sequence is MNSSDVQMMSSQDA. A disordered region spans residues 1–43; it reads MNSSDVQMMSSQDAPGSAGLAPDNIASSLPSKKKSRRGADPTN. The segment at residues 53-81 is a DNA-binding region (zn(2)-C6 fungal-type); sequence CIACRRRKSKCDGALPSCAACASVYGTEC. 6 disordered regions span residues 145-176, 666-689, 773-798, 825-875, 936-999, and 1033-1053; these read RRDE…SQAV, FSTS…PAPP, HQHH…YQQQ, GIPT…VKPP, QGWD…QRQQ, and HGAE…TTVG. The span at 167-176 shows a compositional bias: basic and acidic residues; that stretch reads GRDDATSQAV. The segment covering 666 to 677 has biased composition (polar residues); the sequence is FSTSEVPSPNRT. Low complexity predominate over residues 849-859; it reads QPQQQQQPQAQ. Composition is skewed to gly residues over residues 940 to 965 and 976 to 988; these read LEGG…GGAG and NIGG…GGST. The segment covering 990–999 has biased composition (low complexity); the sequence is QRQQQQQRQQ.

It is found in the nucleus. In terms of biological role, pathway-specific regulatory gene of nitrate assimilation; it activates the transcription of the genes for nitrate and nitrite reductases. This Neurospora crassa (strain ATCC 24698 / 74-OR23-1A / CBS 708.71 / DSM 1257 / FGSC 987) protein is Nitrogen assimilation transcription factor nit-4 (nit-4).